We begin with the raw amino-acid sequence, 188 residues long: UPF0340 protein SSU98_0310 (188 aa).

This sequence belongs to the UPF0340 family.

In Streptococcus suis (strain 98HAH33), this protein is UPF0340 protein SSU98_0310.